The primary structure comprises 177 residues: Peptidyl-tRNA hydrolase (177 aa).

Residue Tyr14 coordinates tRNA. His19 (proton acceptor) is an active-site residue. Positions 64, 66, and 112 each coordinate tRNA.

Belongs to the PTH family. Monomer.

The protein localises to the cytoplasm. It carries out the reaction an N-acyl-L-alpha-aminoacyl-tRNA + H2O = an N-acyl-L-amino acid + a tRNA + H(+). Its function is as follows. Hydrolyzes ribosome-free peptidyl-tRNAs (with 1 or more amino acids incorporated), which drop off the ribosome during protein synthesis, or as a result of ribosome stalling. In terms of biological role, catalyzes the release of premature peptidyl moieties from peptidyl-tRNA molecules trapped in stalled 50S ribosomal subunits, and thus maintains levels of free tRNAs and 50S ribosomes. This Latilactobacillus sakei (Lactobacillus sakei) protein is Peptidyl-tRNA hydrolase.